The following is a 201-amino-acid chain: Holliday junction resolvase RecU (201 aa).

The Mg(2+) site is built by threonine 87, aspartate 89, glutamate 102, and glutamine 121.

This sequence belongs to the RecU family. It depends on Mg(2+) as a cofactor.

The protein localises to the cytoplasm. The enzyme catalyses Endonucleolytic cleavage at a junction such as a reciprocal single-stranded crossover between two homologous DNA duplexes (Holliday junction).. Its function is as follows. Endonuclease that resolves Holliday junction intermediates in genetic recombination. Cleaves mobile four-strand junctions by introducing symmetrical nicks in paired strands. Promotes annealing of linear ssDNA with homologous dsDNA. Required for DNA repair, homologous recombination and chromosome segregation. This chain is Holliday junction resolvase RecU, found in Listeria monocytogenes serotype 4b (strain F2365).